Here is a 135-residue protein sequence, read N- to C-terminus: ATP synthase epsilon chain, chloroplastic (135 aa).

The protein belongs to the ATPase epsilon chain family. In terms of assembly, F-type ATPases have 2 components, CF(1) - the catalytic core - and CF(0) - the membrane proton channel. CF(1) has five subunits: alpha(3), beta(3), gamma(1), delta(1), epsilon(1). CF(0) has three main subunits: a, b and c.

It is found in the plastid. It localises to the chloroplast thylakoid membrane. Its function is as follows. Produces ATP from ADP in the presence of a proton gradient across the membrane. This chain is ATP synthase epsilon chain, chloroplastic, found in Stigeoclonium helveticum (Green alga).